Consider the following 691-residue polypeptide: Elongation factor G (691 aa).

Residues K8 to D283 enclose the tr-type G domain. GTP-binding positions include A17 to T24, D81 to H85, and N135 to D138.

Belongs to the TRAFAC class translation factor GTPase superfamily. Classic translation factor GTPase family. EF-G/EF-2 subfamily.

Its subcellular location is the cytoplasm. Its function is as follows. Catalyzes the GTP-dependent ribosomal translocation step during translation elongation. During this step, the ribosome changes from the pre-translocational (PRE) to the post-translocational (POST) state as the newly formed A-site-bound peptidyl-tRNA and P-site-bound deacylated tRNA move to the P and E sites, respectively. Catalyzes the coordinated movement of the two tRNA molecules, the mRNA and conformational changes in the ribosome. The chain is Elongation factor G from Campylobacter jejuni subsp. jejuni serotype O:23/36 (strain 81-176).